Reading from the N-terminus, the 417-residue chain is Serine hydroxymethyltransferase (417 aa).

(6S)-5,6,7,8-tetrahydrofolate is bound by residues leucine 121 and 125-127 (GHL). Lysine 229 bears the N6-(pyridoxal phosphate)lysine mark. 355–357 (SPF) provides a ligand contact to (6S)-5,6,7,8-tetrahydrofolate.

The protein belongs to the SHMT family. As to quaternary structure, homodimer. Pyridoxal 5'-phosphate serves as cofactor.

Its subcellular location is the cytoplasm. It carries out the reaction (6R)-5,10-methylene-5,6,7,8-tetrahydrofolate + glycine + H2O = (6S)-5,6,7,8-tetrahydrofolate + L-serine. It functions in the pathway one-carbon metabolism; tetrahydrofolate interconversion. Its pathway is amino-acid biosynthesis; glycine biosynthesis; glycine from L-serine: step 1/1. Catalyzes the reversible interconversion of serine and glycine with tetrahydrofolate (THF) serving as the one-carbon carrier. This reaction serves as the major source of one-carbon groups required for the biosynthesis of purines, thymidylate, methionine, and other important biomolecules. Also exhibits THF-independent aldolase activity toward beta-hydroxyamino acids, producing glycine and aldehydes, via a retro-aldol mechanism. The sequence is that of Serine hydroxymethyltransferase from Edwardsiella ictaluri (strain 93-146).